Here is a 360-residue protein sequence, read N- to C-terminus: Protein Wnt-2 (360 aa).

Residues 1–25 (MNSPLRGIWLWLPLLLTWLTPEVSS) form the signal peptide. Disulfide bonds link Cys-76-Cys-87, Cys-127-Cys-135, Cys-137-Cys-157, Cys-206-Cys-220, Cys-208-Cys-215, Cys-278-Cys-309, Cys-294-Cys-304, Cys-308-Cys-348, Cys-324-Cys-339, Cys-326-Cys-336, and Cys-331-Cys-332. Residue Ser-212 is the site of O-palmitoleoyl serine; by PORCN attachment. The N-linked (GlcNAc...) asparagine glycan is linked to Asn-295.

Belongs to the Wnt family. Post-translationally, palmitoleoylation is required for efficient binding to frizzled receptors. Depalmitoleoylation leads to Wnt signaling pathway inhibition.

Its subcellular location is the secreted. The protein resides in the extracellular space. It localises to the extracellular matrix. Ligand for members of the frizzled family of seven transmembrane receptors. Probable developmental protein. May be a signaling molecule which affects the development of discrete regions of tissues. Is likely to signal over only few cell diameters. This chain is Protein Wnt-2 (WNT2), found in Ateles geoffroyi (Black-handed spider monkey).